A 273-amino-acid chain; its full sequence is NH(3)-dependent NAD(+) synthetase (273 aa).

46-53 (GISGGQDS) is a binding site for ATP. Aspartate 52 is a Mg(2+) binding site. Position 139 (arginine 139) interacts with deamido-NAD(+). Residue threonine 159 participates in ATP binding. Residue glutamate 164 coordinates Mg(2+). 2 residues coordinate deamido-NAD(+): lysine 172 and aspartate 179. ATP is bound by residues lysine 188 and threonine 210. 259–260 (HK) serves as a coordination point for deamido-NAD(+).

It belongs to the NAD synthetase family. Homodimer.

The enzyme catalyses deamido-NAD(+) + NH4(+) + ATP = AMP + diphosphate + NAD(+) + H(+). It functions in the pathway cofactor biosynthesis; NAD(+) biosynthesis; NAD(+) from deamido-NAD(+) (ammonia route): step 1/1. Functionally, catalyzes the ATP-dependent amidation of deamido-NAD to form NAD. Uses ammonia as a nitrogen source. The chain is NH(3)-dependent NAD(+) synthetase from Streptococcus agalactiae serotype Ia (strain ATCC 27591 / A909 / CDC SS700).